The following is a 343-amino-acid chain: NAC domain-containing protein 4 (343 aa).

The NAC domain occupies 12 to 168; sequence LPPGFRFHPT…EWVLCRVFKK (157 aa). The DNA-binding element occupies 109–174; that stretch reads VGMKKTLVFY…VFKKSLVEVG (66 aa). The disordered stretch occupies residues 304-333; that stretch reads GGERERLSASQDTGLTSDVNPEISSSSGQK. Residues 311-332 are compositionally biased toward polar residues; that stretch reads SASQDTGLTSDVNPEISSSSGQ.

Expressed in roots, tiller buds, stems, leaves, lamina joints and the young husks. Expressed in embryos, coleoptiles, radicles, leaf pulvinus, ligules, panicles, palea and lemma, anthers, and the internode of the peduncles. Expressed in young leaves, root meristems, florescence meristems and young spikelets.

Its subcellular location is the nucleus. Its function is as follows. Transcription factor involved in the regulation of tiller bud outgrowth, but does not seem to regulate tiller bud initiation. Possesses transactivation activity in yeast. Involved in the regulation of plant architecture and grain yield. Acts as a negative regulator of plant height and flowering time. Regulates directly key genes of the gibberellin (GA) pathway by binding to their promoters. Positively regulates leaf senescence in an age-dependent manner. Activates directly the expression of the chlorophyll degradation genes SGR and NYC3. Positively regulates the level of abscisic acid (ABA) by directly up-regulating the expression of the ABA biosynthetic genes NCED3 and ZEP, and down-regulating the ABA catabolic gene CYP707A5/ABA8OX1. Promotes salt-induced cell death accompanied by the loss of plasma membrane integrity, nuclear DNA fragmentation, and changes of caspase-like activity. Targets genes that encoded a reactive oxygen species (ROS) scavenger COX11 and a caspase-like protease AP37. Activates the potassium efflux channels GORK and SKOR. Acts as a positive regulator of drought and salt tolerance through ABA-mediated pathways. Acts as a negative regulator of root growth. Functions as an upstream integrator of auxin and cytokinin signals that affect CROWN ROOTLESS (CRL) and cyclin-dependent protein kinase (CDK) genes to regulate cell division during root development. Binds directly to the promoters of the auxin inactivation-related genes GH3.6 and GH3.8, the auxin signaling-related gene ARF25, and the cytokinin oxidase gene CKX4. Activates directly the expressions of the 1-aminocyclopropane-1-carboxylate oxidase genes ACO1 and ACO3, enhancing ethylene synthesis, and then retarding seedling establishment. The chain is NAC domain-containing protein 4 from Oryza sativa subsp. japonica (Rice).